Consider the following 615-residue polypeptide: Chaperone protein DnaK (615 aa).

A Phosphothreonine; by autocatalysis modification is found at threonine 177. Residues 567 to 615 (TKESQGIAMKAYQKAQEKQAQEKGTQENTTAKNEKPQDEVVDADFEEKK) are disordered. The segment covering 581-591 (AQEKQAQEKGT) has biased composition (basic and acidic residues). Over residues 605 to 615 (EVVDADFEEKK) the composition is skewed to acidic residues.

Belongs to the heat shock protein 70 family.

Functionally, acts as a chaperone. This chain is Chaperone protein DnaK, found in Onion yellows phytoplasma (strain OY-M).